We begin with the raw amino-acid sequence, 148 residues long: Large ribosomal subunit protein bL9 (148 aa).

Belongs to the bacterial ribosomal protein bL9 family.

Functionally, binds to the 23S rRNA. This Clostridium beijerinckii (strain ATCC 51743 / NCIMB 8052) (Clostridium acetobutylicum) protein is Large ribosomal subunit protein bL9.